The chain runs to 92 residues: MARTVNCQYLKKEADGLAFQLYPGELGKRIFDNISQEAWSLWQAKQTMLINEKKLNMMNVDDRKFLEEQMVNFLFEGKEVEIEGYVPQKDDE.

The protein belongs to the Fe(2+)-trafficking protein family.

Could be a mediator in iron transactions between iron acquisition and iron-requiring processes, such as synthesis and/or repair of Fe-S clusters in biosynthetic enzymes. This is Probable Fe(2+)-trafficking protein from Shewanella loihica (strain ATCC BAA-1088 / PV-4).